An 83-amino-acid chain; its full sequence is Cytochrome c5 (83 aa).

Residues cysteine 15, cysteine 18, histidine 19, and methionine 59 each contribute to the heme c site. Cysteine 65 and cysteine 68 are oxidised to a cystine.

This sequence belongs to the cytochrome c family. As to quaternary structure, homodimer. Binds 1 heme c group covalently per subunit.

It is unreactive with cytochrome c reductase or oxidase. The polypeptide is Cytochrome c5 (Azotobacter vinelandii).